We begin with the raw amino-acid sequence, 576 residues long: TOX high mobility group box family member 3 (576 aa).

3 disordered regions span residues 189–258, 422–443, and 519–563; these read NLGG…PQKP, TMVG…QHQM, and LQHM…QIQS. The segment covering 204-215 has biased composition (low complexity); the sequence is ASKSATPSPSSS. A compositionally biased stretch (basic and acidic residues) spans 223–239; that stretch reads EANRAIGEKRAAPDSGK. Positions 240–250 are enriched in basic residues; the sequence is KPKTPKKKKKK. The segment at residues 255–323 is a DNA-binding region (HMG box); that stretch reads PQKPVSAYAL…EYLKALAAYR (69 aa). A compositionally biased stretch (low complexity) spans 428 to 443; sequence PSTQVSPSVQTQQHQM. Residues 528–542 show a composition bias toward polar residues; it reads PSPRQHSPVASQITS. Low complexity predominate over residues 549 to 563; it reads SPQPASQQHQSQIQS.

Homodimer. Interacts with CREB1; the interaction is not depolarization dependent. Interacts with CREBBP (via C-terminus). Interacts (via HGM box) with CITED1 (via C-terminus); the interaction increases estrogen-response element (ERE)-dependent transcription and protection against cell death. Interacts with CREB1 (phosphorylated form). In terms of tissue distribution, expressed mainly in epithelial cells. Expressed in the central nervous system (CNS), in the ileum and within the brain in the frontal and occipital lobe.

Its subcellular location is the nucleus. Functionally, transcriptional coactivator of the p300/CBP-mediated transcription complex. Activates transactivation through cAMP response element (CRE) sites. Protects against cell death by inducing antiapoptotic and repressing pro-apoptotic transcripts. Stimulates transcription from the estrogen-responsive or BCL-2 promoters. Required for depolarization-induced transcription activation of the C-FOS promoter in neurons. Associates with chromatin to the estrogen-responsive C3 promoter region. The protein is TOX high mobility group box family member 3 (TOX3) of Homo sapiens (Human).